The sequence spans 693 residues: Glycine--tRNA ligase beta subunit (693 aa).

It belongs to the class-II aminoacyl-tRNA synthetase family. In terms of assembly, tetramer of two alpha and two beta subunits.

The protein localises to the cytoplasm. It catalyses the reaction tRNA(Gly) + glycine + ATP = glycyl-tRNA(Gly) + AMP + diphosphate. The chain is Glycine--tRNA ligase beta subunit (glyS) from Halalkalibacterium halodurans (strain ATCC BAA-125 / DSM 18197 / FERM 7344 / JCM 9153 / C-125) (Bacillus halodurans).